The sequence spans 71 residues: Cytochrome c oxidase subunit 8C, mitochondrial (71 aa).

A mitochondrion-targeting transit peptide spans 1-28 (MAHLPRVCPFIRRLRVALLCLRPGHRFA). The Mitochondrial matrix portion of the chain corresponds to 29–39 (HSEPQRQRPAS). Residues 40–63 (ALEMAVGIVVIFSAFLTPSAYVLS) form a helical membrane-spanning segment. Over 64-71 (NLSQFRRE) the chain is Mitochondrial intermembrane.

This sequence belongs to the cytochrome c oxidase VIII family. In terms of assembly, component of the cytochrome c oxidase (complex IV, CIV), a multisubunit enzyme composed of 14 subunits. The complex is composed of a catalytic core of 3 subunits MT-CO1, MT-CO2 and MT-CO3, encoded in the mitochondrial DNA, and 11 supernumerary subunits COX4I, COX5A, COX5B, COX6A, COX6B, COX6C, COX7A, COX7B, COX7C, COX8 and NDUFA4, which are encoded in the nuclear genome. The complex exists as a monomer or a dimer and forms supercomplexes (SCs) in the inner mitochondrial membrane with NADH-ubiquinone oxidoreductase (complex I, CI) and ubiquinol-cytochrome c oxidoreductase (cytochrome b-c1 complex, complex III, CIII), resulting in different assemblies (supercomplex SCI(1)III(2)IV(1) and megacomplex MCI(2)III(2)IV(2)).

The protein resides in the mitochondrion inner membrane. Its pathway is energy metabolism; oxidative phosphorylation. Component of the cytochrome c oxidase, the last enzyme in the mitochondrial electron transport chain which drives oxidative phosphorylation. The respiratory chain contains 3 multisubunit complexes succinate dehydrogenase (complex II, CII), ubiquinol-cytochrome c oxidoreductase (cytochrome b-c1 complex, complex III, CIII) and cytochrome c oxidase (complex IV, CIV), that cooperate to transfer electrons derived from NADH and succinate to molecular oxygen, creating an electrochemical gradient over the inner membrane that drives transmembrane transport and the ATP synthase. Cytochrome c oxidase is the component of the respiratory chain that catalyzes the reduction of oxygen to water. Electrons originating from reduced cytochrome c in the intermembrane space (IMS) are transferred via the dinuclear copper A center (CU(A)) of subunit 2 and heme A of subunit 1 to the active site in subunit 1, a binuclear center (BNC) formed by heme A3 and copper B (CU(B)). The BNC reduces molecular oxygen to 2 water molecules using 4 electrons from cytochrome c in the IMS and 4 protons from the mitochondrial matrix. The polypeptide is Cytochrome c oxidase subunit 8C, mitochondrial (COX8C) (Eulemur fulvus fulvus (Brown lemur)).